We begin with the raw amino-acid sequence, 456 residues long: Glycosyl hydrolase family 109 protein 2 (456 aa).

Residues 1–33 (MSGFDRRSFLKASMVTAAATALAACASSERATG) constitute a signal peptide (tat-type signal). NAD(+) contacts are provided by residues 63–64 (ER), aspartate 85, 134–137 (WAWH), 154–155 (EV), and asparagine 183. Residues tyrosine 212, arginine 231, 243–246 (YPTH), and tyrosine 325 contribute to the substrate site. An NAD(+)-binding site is contributed by tyrosine 243.

It belongs to the Gfo/Idh/MocA family. Glycosyl hydrolase 109 subfamily. NAD(+) is required as a cofactor. Predicted to be exported by the Tat system. The position of the signal peptide cleavage has not been experimentally proven.

Its function is as follows. Glycosidase. In Shewanella sp. (strain ANA-3), this protein is Glycosyl hydrolase family 109 protein 2.